A 204-amino-acid chain; its full sequence is CASP-like protein 4B4 (204 aa).

Residues 1–60 are Cytoplasmic-facing; it reads MSAAVAASSGAPAADVEKGAAAADANVDGGGAPAAAAASGEGVVSAVVRRWRRQDLLEKS. Residues 61–81 traverse the membrane as a helical segment; sequence GSALRVAAWAFSLLAFVVMGA. At 82 to 98 the chain is on the extracellular side; the sequence is NDHGDWRQFEHYEEYRY. The chain crosses the membrane as a helical span at residues 99-119; sequence VVAIGVLAFIYTTLQLVRHGV. Residues 120–130 are Cytoplasmic-facing; it reads RLTGGQDLQGK. A helical membrane pass occupies residues 131 to 151; that stretch reads VAVLVDFAGDQVTAYLLMSAV. The Extracellular segment spans residues 152-175; it reads SAAIPITNRMREGADNVFTDSSAA. The helical transmembrane segment at 176–196 threads the bilayer; it reads SISMAFFAFLCLALSALVSGF. Residues 197 to 204 are Cytoplasmic-facing; it reads KLAKQTYI.

Belongs to the Casparian strip membrane proteins (CASP) family. Homodimer and heterodimers.

The protein resides in the cell membrane. This Oryza sativa subsp. japonica (Rice) protein is CASP-like protein 4B4.